We begin with the raw amino-acid sequence, 163 residues long: Cytochrome c-type biogenesis protein CcmE (163 aa).

At 1–8 (MNPRRKKR) the chain is on the cytoplasmic side. A helical; Signal-anchor for type II membrane protein transmembrane segment spans residues 9 to 29 (LTIILAISAGLAAVIGLVLYA). Over 30–163 (LSQNIDLFYT…TEAQLKGSKQ (134 aa)) the chain is Periplasmic. Residues H131 and Y135 each contribute to the heme site.

The protein belongs to the CcmE/CycJ family.

It is found in the cell inner membrane. Functionally, heme chaperone required for the biogenesis of c-type cytochromes. Transiently binds heme delivered by CcmC and transfers the heme to apo-cytochromes in a process facilitated by CcmF and CcmH. The protein is Cytochrome c-type biogenesis protein CcmE of Aeromonas hydrophila subsp. hydrophila (strain ATCC 7966 / DSM 30187 / BCRC 13018 / CCUG 14551 / JCM 1027 / KCTC 2358 / NCIMB 9240 / NCTC 8049).